The sequence spans 634 residues: Probable potassium transport system protein Kup (634 aa).

12 helical membrane passes run isoleucine 21 to leucine 41, valine 58 to valine 78, isoleucine 110 to isoleucine 130, proline 148 to cysteine 168, phenylalanine 180 to isoleucine 200, phenylalanine 217 to threonine 237, tryptophan 258 to leucine 278, glycine 296 to isoleucine 316, isoleucine 348 to phenylalanine 368, alanine 377 to alanine 397, leucine 408 to isoleucine 428, and aspartate 432 to leucine 452.

The protein belongs to the HAK/KUP transporter (TC 2.A.72) family.

It localises to the cell inner membrane. The enzyme catalyses K(+)(in) + H(+)(in) = K(+)(out) + H(+)(out). Transport of potassium into the cell. Likely operates as a K(+):H(+) symporter. This chain is Probable potassium transport system protein Kup, found in Xylella fastidiosa (strain Temecula1 / ATCC 700964).